A 130-amino-acid polypeptide reads, in one-letter code: Sec-independent protein translocase protein TatB (130 aa).

Residues 2 to 22 (FANIGWGEMLVLVVVGLVVLG) form a helical membrane-spanning segment. The interval 108–130 (DAVASAQEAPDEPVRPPFDSDAT) is disordered.

This sequence belongs to the TatB family. As to quaternary structure, the Tat system comprises two distinct complexes: a TatABC complex, containing multiple copies of TatA, TatB and TatC subunits, and a separate TatA complex, containing only TatA subunits. Substrates initially bind to the TatABC complex, which probably triggers association of the separate TatA complex to form the active translocon.

The protein localises to the cell membrane. Its function is as follows. Part of the twin-arginine translocation (Tat) system that transports large folded proteins containing a characteristic twin-arginine motif in their signal peptide across membranes. Together with TatC, TatB is part of a receptor directly interacting with Tat signal peptides. TatB may form an oligomeric binding site that transiently accommodates folded Tat precursor proteins before their translocation. The chain is Sec-independent protein translocase protein TatB from Mycobacterium ulcerans (strain Agy99).